A 229-amino-acid chain; its full sequence is Cytochrome c oxidase subunit 2 (229 aa).

Residues Met1 to Tyr26 are Mitochondrial intermembrane-facing. A helical transmembrane segment spans residues Thr27–Ser48. The Mitochondrial matrix portion of the chain corresponds to Ser49–Glu62. Residues Thr63–Gln82 traverse the membrane as a helical segment. Topologically, residues Leu83–Glu229 are mitochondrial intermembrane. Cu cation-binding residues include His161, Cys196, Glu198, Cys200, His204, and Met207. Glu198 contacts Mg(2+).

Belongs to the cytochrome c oxidase subunit 2 family. In terms of assembly, component of the cytochrome c oxidase (complex IV, CIV), a multisubunit enzyme composed of a catalytic core of 3 subunits and several supernumerary subunits. The complex exists as a monomer or a dimer and forms supercomplexes (SCs) in the inner mitochondrial membrane with ubiquinol-cytochrome c oxidoreductase (cytochrome b-c1 complex, complex III, CIII). Requires Cu cation as cofactor.

Its subcellular location is the mitochondrion inner membrane. The catalysed reaction is 4 Fe(II)-[cytochrome c] + O2 + 8 H(+)(in) = 4 Fe(III)-[cytochrome c] + 2 H2O + 4 H(+)(out). Component of the cytochrome c oxidase, the last enzyme in the mitochondrial electron transport chain which drives oxidative phosphorylation. The respiratory chain contains 3 multisubunit complexes succinate dehydrogenase (complex II, CII), ubiquinol-cytochrome c oxidoreductase (cytochrome b-c1 complex, complex III, CIII) and cytochrome c oxidase (complex IV, CIV), that cooperate to transfer electrons derived from NADH and succinate to molecular oxygen, creating an electrochemical gradient over the inner membrane that drives transmembrane transport and the ATP synthase. Cytochrome c oxidase is the component of the respiratory chain that catalyzes the reduction of oxygen to water. Electrons originating from reduced cytochrome c in the intermembrane space (IMS) are transferred via the dinuclear copper A center (CU(A)) of subunit 2 and heme A of subunit 1 to the active site in subunit 1, a binuclear center (BNC) formed by heme A3 and copper B (CU(B)). The BNC reduces molecular oxygen to 2 water molecules using 4 electrons from cytochrome c in the IMS and 4 protons from the mitochondrial matrix. The sequence is that of Cytochrome c oxidase subunit 2 (COII) from Pisaster ochraceus (Ochre sea star).